Reading from the N-terminus, the 567-residue chain is Oxygen-dependent choline dehydrogenase (567 aa).

An FAD-binding site is contributed by 4-33 (DYIIIGAGSAGNVLAARLTEDADVTVLLLE). H473 functions as the Proton acceptor in the catalytic mechanism.

Belongs to the GMC oxidoreductase family. Requires FAD as cofactor.

It catalyses the reaction choline + A = betaine aldehyde + AH2. It carries out the reaction betaine aldehyde + NAD(+) + H2O = glycine betaine + NADH + 2 H(+). It participates in amine and polyamine biosynthesis; betaine biosynthesis via choline pathway; betaine aldehyde from choline (cytochrome c reductase route): step 1/1. In terms of biological role, involved in the biosynthesis of the osmoprotectant glycine betaine. Catalyzes the oxidation of choline to betaine aldehyde and betaine aldehyde to glycine betaine at the same rate. This is Oxygen-dependent choline dehydrogenase from Yersinia pestis bv. Antiqua (strain Antiqua).